Consider the following 35-residue polypeptide: Sorbin and SH3 domain-containing protein 1 (35 aa).

One can recognise a SoHo domain in the interval 1 to 8 (LNRDDDSD). The residue at position 15 (Ser15) is a Phosphoserine. One can recognise an SH3 domain in the interval 22–35 (CDDGWFVGTSRRTK).

Interacts with the long isoform of AFDN and with VCL. AFDN and VCL bind to SORBS1 in a competitive manner and do not form a ternary complex. Interacts with ABL1, CBL, CBLB and INPPL1/SHIP2 through the third SH3 domain. Interaction with ABL1 occurs only after insulin stimulation while this has no effect on the interaction with INPPL1. Interacts with the insulin receptor but dissociates from it following insulin stimulation. Also interacts with SCA7, PTK2/FAK1 and flotillin. Interacts (via SH3 domain 2) with PXN. Interacts (via third SH3 domain) with the Ten-1 ICD form of TENM1; the interaction induces the translocation of SORBS1 to the nucleus. In terms of processing, O-glycosylated.

Its subcellular location is the cell junction. The protein resides in the adherens junction. It localises to the cell membrane. It is found in the cytoplasm. The protein localises to the cytoskeleton. Its subcellular location is the focal adhesion. The protein resides in the nucleus. It localises to the nucleus matrix. Plays a role in tyrosine phosphorylation of CBL by linking CBL to the insulin receptor. Required for insulin-stimulated glucose transport. Involved in formation of actin stress fibers and focal adhesions. This is Sorbin and SH3 domain-containing protein 1 from Rattus norvegicus (Rat).